Consider the following 403-residue polypeptide: Phospholipase A1-II 2 (403 aa).

Ser218 functions as the Acyl-ester intermediate in the catalytic mechanism. Active-site charge relay system residues include Ser218, Asp286, and His323. The disordered stretch occupies residues 381 to 403 (GPDGRWVLQDHEPDDDDDDDDDD). The span at 392 to 403 (EPDDDDDDDDDD) shows a compositional bias: acidic residues.

Belongs to the AB hydrolase superfamily. Lipase family.

Its subcellular location is the cytoplasm. Functionally, acylhydrolase that catalyzes the hydrolysis of phospholipids at the sn-1 position. The polypeptide is Phospholipase A1-II 2 (Oryza sativa subsp. indica (Rice)).